Consider the following 210-residue polypeptide: Large ribosomal subunit protein uL4 (210 aa).

Over residues 41-52 (QTNARQGTASTK) the composition is skewed to polar residues. The interval 41 to 71 (QTNARQGTASTKTRAEVRGGGRKPWRQKGTG) is disordered. Residues 60–71 (GGRKPWRQKGTG) show a composition bias toward basic residues.

It belongs to the universal ribosomal protein uL4 family. Part of the 50S ribosomal subunit.

Functionally, one of the primary rRNA binding proteins, this protein initially binds near the 5'-end of the 23S rRNA. It is important during the early stages of 50S assembly. It makes multiple contacts with different domains of the 23S rRNA in the assembled 50S subunit and ribosome. Forms part of the polypeptide exit tunnel. The sequence is that of Large ribosomal subunit protein uL4 from Nostoc sp. (strain PCC 7120 / SAG 25.82 / UTEX 2576).